Consider the following 466-residue polypeptide: Amidase (466 aa).

Residues Lys79 and Ser148 each act as charge relay system in the active site. The segment at 128 to 152 (YGRITPKSRNPRDPGRTPGGSSGGS) is disordered. Catalysis depends on Ser172, which acts as the Acyl-ester intermediate.

The protein belongs to the amidase family.

It catalyses the reaction a monocarboxylic acid amide + H2O = a monocarboxylate + NH4(+). This Pseudomonas putida (Arthrobacter siderocapsulatus) protein is Amidase.